We begin with the raw amino-acid sequence, 159 residues long: Ribosomal RNA large subunit methyltransferase H (159 aa).

Residues leucine 76, glycine 108, and 127–132 (FGRLTL) each bind S-adenosyl-L-methionine.

This sequence belongs to the RNA methyltransferase RlmH family. As to quaternary structure, homodimer.

The protein resides in the cytoplasm. It carries out the reaction pseudouridine(1915) in 23S rRNA + S-adenosyl-L-methionine = N(3)-methylpseudouridine(1915) in 23S rRNA + S-adenosyl-L-homocysteine + H(+). Functionally, specifically methylates the pseudouridine at position 1915 (m3Psi1915) in 23S rRNA. The polypeptide is Ribosomal RNA large subunit methyltransferase H (Listeria monocytogenes serotype 4b (strain CLIP80459)).